Here is a 212-residue protein sequence, read N- to C-terminus: Imidazole glycerol phosphate synthase subunit HisH (212 aa).

The Glutamine amidotransferase type-1 domain maps to 3–211 (LIAVIDYDMG…VQQVQKLALV (209 aa)). The active-site Nucleophile is Cys81. Residues His186 and Glu188 contribute to the active site.

As to quaternary structure, heterodimer of HisH and HisF.

The protein localises to the cytoplasm. The enzyme catalyses 5-[(5-phospho-1-deoxy-D-ribulos-1-ylimino)methylamino]-1-(5-phospho-beta-D-ribosyl)imidazole-4-carboxamide + L-glutamine = D-erythro-1-(imidazol-4-yl)glycerol 3-phosphate + 5-amino-1-(5-phospho-beta-D-ribosyl)imidazole-4-carboxamide + L-glutamate + H(+). The catalysed reaction is L-glutamine + H2O = L-glutamate + NH4(+). It participates in amino-acid biosynthesis; L-histidine biosynthesis; L-histidine from 5-phospho-alpha-D-ribose 1-diphosphate: step 5/9. IGPS catalyzes the conversion of PRFAR and glutamine to IGP, AICAR and glutamate. The HisH subunit catalyzes the hydrolysis of glutamine to glutamate and ammonia as part of the synthesis of IGP and AICAR. The resulting ammonia molecule is channeled to the active site of HisF. This is Imidazole glycerol phosphate synthase subunit HisH from Microcystis aeruginosa (strain NIES-843 / IAM M-2473).